Consider the following 187-residue polypeptide: NADH-quinone oxidoreductase subunit B (187 aa).

[4Fe-4S] cluster is bound by residues Cys46, Cys47, Cys112, and Cys141.

This sequence belongs to the complex I 20 kDa subunit family. NDH-1 is composed of 14 different subunits. Subunits NuoB, C, D, E, F, and G constitute the peripheral sector of the complex. [4Fe-4S] cluster serves as cofactor.

Its subcellular location is the cell inner membrane. It catalyses the reaction a quinone + NADH + 5 H(+)(in) = a quinol + NAD(+) + 4 H(+)(out). Its function is as follows. NDH-1 shuttles electrons from NADH, via FMN and iron-sulfur (Fe-S) centers, to quinones in the respiratory chain. The immediate electron acceptor for the enzyme in this species is believed to be ubiquinone. Couples the redox reaction to proton translocation (for every two electrons transferred, four hydrogen ions are translocated across the cytoplasmic membrane), and thus conserves the redox energy in a proton gradient. In Myxococcus xanthus (strain DK1622), this protein is NADH-quinone oxidoreductase subunit B.